The primary structure comprises 130 residues: Ribosome-binding factor A (130 aa).

It belongs to the RbfA family. Monomer. Binds 30S ribosomal subunits, but not 50S ribosomal subunits or 70S ribosomes.

The protein localises to the cytoplasm. One of several proteins that assist in the late maturation steps of the functional core of the 30S ribosomal subunit. Associates with free 30S ribosomal subunits (but not with 30S subunits that are part of 70S ribosomes or polysomes). Required for efficient processing of 16S rRNA. May interact with the 5'-terminal helix region of 16S rRNA. The chain is Ribosome-binding factor A from Methylibium petroleiphilum (strain ATCC BAA-1232 / LMG 22953 / PM1).